Here is a 657-residue protein sequence, read N- to C-terminus: Putative serine protease (657 aa).

3 helical membrane passes run 4–24 (YLATSVRLCLMVCIVGWLLMP), 46–62 (WLLTGLSTWFCIVPSGT), and 109–131 (LLSGVTFSVVLWYPRILVTVLML). Residues 239 to 434 (QPGSDFVECE…ETDRYARTME (196 aa)) form the Peptidase S39 domain. Residues His284, Asp318, and Ser386 each act as for protease activity in the active site. The segment at 513–605 (PLGGLPISNG…PPSTGSVPKS (93 aa)) is disordered. Positions 548 to 559 (HTRRRRRNKKKS) are enriched in basic residues. Residues 560–569 (KNSETGHGPE) show a composition bias toward basic and acidic residues. The segment covering 571-589 (QSQQQSRPSSPIPDDSAPV) has biased composition (low complexity).

This sequence belongs to the peptidase S39B family.

It localises to the host membrane. Functionally, putative serine protease. The polypeptide is Putative serine protease (Mushroom bacilliform virus (isolate Australia/AUS LF-1) (MBV)).